A 418-amino-acid chain; its full sequence is Argininosuccinate synthase (418 aa).

ATP contacts are provided by residues 14–22 and A42; that span reads AYSGGLDTS. The L-citrulline site is built by Y94 and S99. G124 contacts ATP. L-aspartate is bound by residues T126, N130, and D131. N130 provides a ligand contact to L-citrulline. Residues R134, S183, S192, E273, and Y285 each contribute to the L-citrulline site.

Belongs to the argininosuccinate synthase family. Type 1 subfamily. As to quaternary structure, homotetramer.

It localises to the cytoplasm. The enzyme catalyses L-citrulline + L-aspartate + ATP = 2-(N(omega)-L-arginino)succinate + AMP + diphosphate + H(+). Its pathway is amino-acid biosynthesis; L-arginine biosynthesis; L-arginine from L-ornithine and carbamoyl phosphate: step 2/3. In Colwellia psychrerythraea (strain 34H / ATCC BAA-681) (Vibrio psychroerythus), this protein is Argininosuccinate synthase.